The sequence spans 207 residues: Ribonuclease HII (207 aa).

The region spanning Gln-20–Glu-207 is the RNase H type-2 domain. Positions 26, 27, and 118 each coordinate a divalent metal cation.

Belongs to the RNase HII family. The cofactor is Mn(2+). Mg(2+) serves as cofactor.

It localises to the cytoplasm. The catalysed reaction is Endonucleolytic cleavage to 5'-phosphomonoester.. Its function is as follows. Endonuclease that specifically degrades the RNA of RNA-DNA hybrids. This is Ribonuclease HII from Aliivibrio salmonicida (strain LFI1238) (Vibrio salmonicida (strain LFI1238)).